The following is a 352-amino-acid chain: MFDLNQSLFLRALRRQPVERTPIWIMRQAGRYLPEYRKVREYAGDFLNLCKNPELACEVTLQPLRRYALDAAILFSDILTIPDAMGLGLYFAEGEGPRFTNPLQDTKAIHTLKIPSIPESLSYVFDAARLIRQEMPKELPLIGFSGSPWTLACYMVEGGSSRDFKRILNLIYTEKEAAHLLLSKLAASVTAYLIEQIKAGVNAVMIFDTWGGVLTPQNYKDFSLAYMHQIVQQLKKEYPDIPVILFTKNGGQWLEWMAETGCDALGVDWTCDLASARKRVGGKVALQGNLDPAVLLTTKNCIRSEVGSVLASYGYGTGHIFNLGHGITPDVPPENVAIMIEAVHEISPQYHL.

Residues 27-31, aspartate 77, tyrosine 154, threonine 209, and histidine 325 contribute to the substrate site; that span reads RQAGR.

The protein belongs to the uroporphyrinogen decarboxylase family. Homodimer.

The protein resides in the cytoplasm. It carries out the reaction uroporphyrinogen III + 4 H(+) = coproporphyrinogen III + 4 CO2. It participates in porphyrin-containing compound metabolism; protoporphyrin-IX biosynthesis; coproporphyrinogen-III from 5-aminolevulinate: step 4/4. In terms of biological role, catalyzes the decarboxylation of four acetate groups of uroporphyrinogen-III to yield coproporphyrinogen-III. This is Uroporphyrinogen decarboxylase from Legionella pneumophila (strain Lens).